The primary structure comprises 329 residues: Eukaryotic translation initiation factor 3 subunit I (329 aa).

WD repeat units lie at residues 8-47, 50-89, 145-184, 187-226, and 284-323; these read GHQR…RLGT, GHGG…NIAT, ITDS…KIHS, EHTH…LLKE, and GHFG…FDYT.

Belongs to the eIF-3 subunit I family. As to quaternary structure, component of the eukaryotic translation initiation factor 3 (eIF-3) complex.

It localises to the cytoplasm. Component of the eukaryotic translation initiation factor 3 (eIF-3) complex, which is involved in protein synthesis of a specialized repertoire of mRNAs and, together with other initiation factors, stimulates binding of mRNA and methionyl-tRNAi to the 40S ribosome. The eIF-3 complex specifically targets and initiates translation of a subset of mRNAs involved in cell proliferation. The chain is Eukaryotic translation initiation factor 3 subunit I from Bombyx mori (Silk moth).